A 147-amino-acid polypeptide reads, in one-letter code: Pathogenesis-related protein PR-4A (147 aa).

A signal peptide spans 1–25; that stretch reads MERVNNYKLCVALLIISMVMAMAAA. The Barwin domain occupies 26 to 147; sequence QSATNVRSTY…VNYEFVNCND (122 aa). Intrachain disulfides connect Cys54-Cys86, Cys75-Cys109, and Cys89-Cys145.

Its subcellular location is the secreted. It is found in the cell wall. The chain is Pathogenesis-related protein PR-4A from Nicotiana tabacum (Common tobacco).